The following is a 1107-amino-acid chain: RNA-dependent RNA polymerase 1 (1107 aa).

It belongs to the RdRP family.

The catalysed reaction is RNA(n) + a ribonucleoside 5'-triphosphate = RNA(n+1) + diphosphate. In terms of biological role, RNA-dependent direct polymerase involved in antiviral silencing. Required for the production of some small RNAs (mainly 21 and some 22 nucleotides) derived from the crucifer-infecting tobamovirus (TMV-cg). Required for turnip mosaic virus (TuMV) silencing and accumulation of viral siRNAs. Involved in cucumber mosaic virus (CMV) silencing. Required for the biogenesis of viral secondary siRNAs, process that follows the production of primary siRNAs derived from viral RNA replication. Specifically targets the positive-strand of the 3 RNA genomes of CMV and preferentially amplifies the 5'-terminal siRNAs of each viral genomic RNA. Not involved in the production of siRNAs derived from a single-stranded 336-nucleotide satellite RNA of CMV. The polypeptide is RNA-dependent RNA polymerase 1 (RDR1) (Arabidopsis thaliana (Mouse-ear cress)).